The primary structure comprises 93 residues: Stromal cell-derived factor 1 (93 aa).

The first 21 residues, 1 to 21, serve as a signal peptide directing secretion; that stretch reads MDIRTLALFSILLGSLCLSEG. The Receptor activation motif motif lies at 22-23; that stretch reads KP. Residues 29–33 form a receptor and heparin binding region; the sequence is RCPCR. 2 disulfide bridges follow: cysteine 30–cysteine 55 and cysteine 32–cysteine 71. Heparin is bound by residues 41–51, arginine 62, glutamine 69, and lysine 85; that span reads KSNIKHLKILS. 2 receptor binding regions span residues 48–50 and 60–64; these read KIL and VARLK.

Belongs to the intercrine alpha (chemokine CxC) family. Monomer or homodimer; in equilibrium. Dimer formation is induced by non acidic pH and the presence of multivalent anions, and by binding to cxcr4 or heparin.

Its subcellular location is the secreted. Functionally, chemoattractant. Activates the C-X-C chemokine receptor cxcr4 to induce a rapid and transient rise in the level of intracellular calcium ions, and chemotaxis. Signaling with cxcr4 mediates the directional movement of mesodermal cells during gastrulation. Binds to the allosteric site (site 2) of integrins and activates them in a cxcr4-independent manner. This Xenopus tropicalis (Western clawed frog) protein is Stromal cell-derived factor 1.